The sequence spans 1072 residues: DNA-directed RNA polymerase subunit beta (1072 aa).

This sequence belongs to the RNA polymerase beta chain family. In plastids the minimal PEP RNA polymerase catalytic core is composed of four subunits: alpha, beta, beta', and beta''. When a (nuclear-encoded) sigma factor is associated with the core the holoenzyme is formed, which can initiate transcription.

The protein localises to the plastid. It is found in the chloroplast. It catalyses the reaction RNA(n) + a ribonucleoside 5'-triphosphate = RNA(n+1) + diphosphate. In terms of biological role, DNA-dependent RNA polymerase catalyzes the transcription of DNA into RNA using the four ribonucleoside triphosphates as substrates. This chain is DNA-directed RNA polymerase subunit beta, found in Amborella trichopoda.